The sequence spans 233 residues: Uracil-DNA glycosylase (233 aa).

Aspartate 70 serves as the catalytic Proton acceptor.

It belongs to the uracil-DNA glycosylase (UDG) superfamily. UNG family.

The protein resides in the cytoplasm. The enzyme catalyses Hydrolyzes single-stranded DNA or mismatched double-stranded DNA and polynucleotides, releasing free uracil.. Excises uracil residues from the DNA which can arise as a result of misincorporation of dUMP residues by DNA polymerase or due to deamination of cytosine. The chain is Uracil-DNA glycosylase from Helicobacter acinonychis (strain Sheeba).